A 174-amino-acid chain; its full sequence is Transcription factor bHLH36 (174 aa).

One can recognise a bHLH domain in the interval 1 to 53 (MEKMMHRETERQRRQEMASLYASLRSLLPLHFIKGKRSTSDQVNEAVNYIKYL).

In terms of assembly, homodimer. Expressed constitutively in roots, leaves, stems, and flowers.

The protein localises to the nucleus. The polypeptide is Transcription factor bHLH36 (BHLH36) (Arabidopsis thaliana (Mouse-ear cress)).